The following is a 344-amino-acid chain: L-rhamnose-proton symporter (344 aa).

10 helical membrane-spanning segments follow: residues 4-24 (AITM…CFYA), 38-58 (WSVG…ALLL), 68-88 (FSLS…IGNI), 101-121 (MGIG…TPII), 137-157 (TLLG…AGQL), 175-195 (LVLA…MNAA), 214-234 (LPSY…FCFI), 259-279 (VLLS…YAWG), 290-310 (ISWM…GLVL), and 323-343 (VLSL…IGMA).

The protein belongs to the L-rhamnose transporter (TC 2.A.7.6) family.

It localises to the cell inner membrane. The enzyme catalyses L-rhamnopyranose(in) + H(+)(in) = L-rhamnopyranose(out) + H(+)(out). Its function is as follows. Uptake of L-rhamnose across the cytoplasmic membrane with the concomitant transport of protons into the cell (symport system). In Shigella dysenteriae serotype 1 (strain Sd197), this protein is L-rhamnose-proton symporter.